Consider the following 130-residue polypeptide: Large ribosomal subunit protein bL12 (130 aa).

This sequence belongs to the bacterial ribosomal protein bL12 family. In terms of assembly, homodimer. Part of the ribosomal stalk of the 50S ribosomal subunit. Forms a multimeric L10(L12)X complex, where L10 forms an elongated spine to which 2 to 4 L12 dimers bind in a sequential fashion. Binds GTP-bound translation factors.

Functionally, forms part of the ribosomal stalk which helps the ribosome interact with GTP-bound translation factors. Is thus essential for accurate translation. The sequence is that of Large ribosomal subunit protein bL12 from Chlamydia trachomatis serovar L2 (strain ATCC VR-902B / DSM 19102 / 434/Bu).